A 75-amino-acid chain; its full sequence is Tautomerase PptA (75 aa).

Pro2 serves as the catalytic Proton acceptor; via imino nitrogen.

It belongs to the 4-oxalocrotonate tautomerase family. PptA subfamily. As to quaternary structure, homodimer.

It localises to the cytoplasm. The polypeptide is Tautomerase PptA (Escherichia coli (strain SMS-3-5 / SECEC)).